A 169-amino-acid chain; its full sequence is Shikimate kinase (169 aa).

13–18 (GAGKST) is a binding site for ATP. Ser-17 contributes to the Mg(2+) binding site. Residues Asp-35, Arg-59, and Gly-80 each contribute to the substrate site. Arg-117 is an ATP binding site. Residue Arg-136 participates in substrate binding. Residue Arg-153 participates in ATP binding.

The protein belongs to the shikimate kinase family. Monomer. The cofactor is Mg(2+).

It is found in the cytoplasm. The catalysed reaction is shikimate + ATP = 3-phosphoshikimate + ADP + H(+). Its pathway is metabolic intermediate biosynthesis; chorismate biosynthesis; chorismate from D-erythrose 4-phosphate and phosphoenolpyruvate: step 5/7. Its function is as follows. Catalyzes the specific phosphorylation of the 3-hydroxyl group of shikimic acid using ATP as a cosubstrate. This is Shikimate kinase from Corynebacterium efficiens (strain DSM 44549 / YS-314 / AJ 12310 / JCM 11189 / NBRC 100395).